The following is a 166-amino-acid chain: NAD(P)H-quinone oxidoreductase subunit I, chloroplastic (166 aa).

4Fe-4S ferredoxin-type domains are found at residues 55-84 and 95-124; these read GRIH…VDWK and LNYS…MTEE. [4Fe-4S] cluster-binding residues include cysteine 64, cysteine 67, cysteine 70, cysteine 74, cysteine 104, cysteine 107, cysteine 110, and cysteine 114.

This sequence belongs to the complex I 23 kDa subunit family. NDH is composed of at least 16 different subunits, 5 of which are encoded in the nucleus. [4Fe-4S] cluster is required as a cofactor.

The protein localises to the plastid. It localises to the chloroplast thylakoid membrane. It carries out the reaction a plastoquinone + NADH + (n+1) H(+)(in) = a plastoquinol + NAD(+) + n H(+)(out). The enzyme catalyses a plastoquinone + NADPH + (n+1) H(+)(in) = a plastoquinol + NADP(+) + n H(+)(out). NDH shuttles electrons from NAD(P)H:plastoquinone, via FMN and iron-sulfur (Fe-S) centers, to quinones in the photosynthetic chain and possibly in a chloroplast respiratory chain. The immediate electron acceptor for the enzyme in this species is believed to be plastoquinone. Couples the redox reaction to proton translocation, and thus conserves the redox energy in a proton gradient. This Espeletia timotensis (Andean giant rosette) protein is NAD(P)H-quinone oxidoreductase subunit I, chloroplastic.